The primary structure comprises 187 residues: Large ribosomal subunit protein uL5 (187 aa).

This sequence belongs to the universal ribosomal protein uL5 family. As to quaternary structure, part of the 50S ribosomal subunit; part of the 5S rRNA/L5/L18/L25 subcomplex. Contacts the 5S rRNA and the P site tRNA. Forms a bridge to the 30S subunit in the 70S ribosome.

This is one of the proteins that bind and probably mediate the attachment of the 5S RNA into the large ribosomal subunit, where it forms part of the central protuberance. In the 70S ribosome it contacts protein S13 of the 30S subunit (bridge B1b), connecting the 2 subunits; this bridge is implicated in subunit movement. Contacts the P site tRNA; the 5S rRNA and some of its associated proteins might help stabilize positioning of ribosome-bound tRNAs. The chain is Large ribosomal subunit protein uL5 from Nocardia farcinica (strain IFM 10152).